The primary structure comprises 289 residues: 3-methyl-2-oxobutanoate hydroxymethyltransferase (289 aa).

Over residues 1–15 (MSTTFQLDTSTSRAN) the composition is skewed to polar residues. Positions 1-20 (MSTTFQLDTSTSRANPTPAP) are disordered. Mg(2+) contacts are provided by Asp67 and Asp106. 3-methyl-2-oxobutanoate-binding positions include 67 to 68 (DS), Asp106, and Lys136. Residue Glu138 participates in Mg(2+) binding. Catalysis depends on Glu205, which acts as the Proton acceptor.

This sequence belongs to the PanB family. As to quaternary structure, homodecamer; pentamer of dimers. The cofactor is Mg(2+).

It localises to the cytoplasm. It catalyses the reaction 3-methyl-2-oxobutanoate + (6R)-5,10-methylene-5,6,7,8-tetrahydrofolate + H2O = 2-dehydropantoate + (6S)-5,6,7,8-tetrahydrofolate. Its pathway is cofactor biosynthesis; (R)-pantothenate biosynthesis; (R)-pantoate from 3-methyl-2-oxobutanoate: step 1/2. In terms of biological role, catalyzes the reversible reaction in which hydroxymethyl group from 5,10-methylenetetrahydrofolate is transferred onto alpha-ketoisovalerate to form ketopantoate. The polypeptide is 3-methyl-2-oxobutanoate hydroxymethyltransferase (Novosphingobium aromaticivorans (strain ATCC 700278 / DSM 12444 / CCUG 56034 / CIP 105152 / NBRC 16084 / F199)).